A 572-amino-acid chain; its full sequence is Urease subunit alpha (572 aa).

The Urease domain maps to 133 to 572; sequence GGIDLHVHYI…TSLSQRYFLF (440 aa). His138, His140, and Lys221 together coordinate Ni(2+). Lys221 carries the N6-carboxylysine modification. A substrate-binding site is contributed by His223. The Ni(2+) site is built by His250 and His276. His324 (proton donor) is an active-site residue. A Ni(2+)-binding site is contributed by Asp364.

The protein belongs to the metallo-dependent hydrolases superfamily. Urease alpha subunit family. Heterotrimer of UreA (gamma), UreB (beta) and UreC (alpha) subunits. Three heterotrimers associate to form the active enzyme. Requires Ni cation as cofactor. In terms of processing, carboxylation allows a single lysine to coordinate two nickel ions.

Its subcellular location is the cytoplasm. It carries out the reaction urea + 2 H2O + H(+) = hydrogencarbonate + 2 NH4(+). The protein operates within nitrogen metabolism; urea degradation; CO(2) and NH(3) from urea (urease route): step 1/1. The protein is Urease subunit alpha of Streptococcus thermophilus (strain CNRZ 1066).